A 785-amino-acid polypeptide reads, in one-letter code: Ubiquitin carboxyl-terminal hydrolase 10 (785 aa).

Polar residues-rich tracts occupy residues leucine 113–glutamate 122 and aspartate 262–serine 277. Disordered stretches follow at residues leucine 113–tyrosine 145 and aspartate 262–threonine 314. Over residues histidine 290–glutamate 304 the composition is skewed to basic and acidic residues. A compositionally biased stretch (low complexity) spans alanine 305–threonine 314. Residues arginine 401–valine 782 form the USP domain. The active-site Nucleophile is the cysteine 410. The tract at residues glutamate 537–glutamine 581 is disordered. The segment covering glutamate 552–glutamate 568 has biased composition (acidic residues). Histidine 736 serves as the catalytic Proton acceptor.

It belongs to the peptidase C19 family. USP10 subfamily.

It localises to the cytoplasm. The protein resides in the nucleus. The enzyme catalyses Thiol-dependent hydrolysis of ester, thioester, amide, peptide and isopeptide bonds formed by the C-terminal Gly of ubiquitin (a 76-residue protein attached to proteins as an intracellular targeting signal).. In terms of biological role, hydrolase that can remove conjugated ubiquitin from target proteins such as p53/TP53, RPS2/us5, RPS3/us3, RPS10/eS10, BECN1, SNX3 and CFTR. Acts as an essential regulator of p53/TP53 stability: in unstressed cells, specifically deubiquitinates p53/TP53 in the cytoplasm, leading to counteracts MDM2 action and stabilize p53/TP53. Following DNA damage, translocates to the nucleus and deubiquitinates p53/TP53, leading to regulate the p53/TP53-dependent DNA damage response. Component of a regulatory loop that controls autophagy and p53/TP53 levels. Plays a key role in 40S ribosome subunit recycling when a ribosome has stalled during translation: acts both by inhibiting formation of stress granules, which store stalled translation pre-initiation complexes, and mediating deubiquitination of 40S ribosome subunits. Deubiquitinates CFTR in early endosomes, enhancing its endocytic recycling. The protein is Ubiquitin carboxyl-terminal hydrolase 10 (USP10) of Gallus gallus (Chicken).